A 396-amino-acid polypeptide reads, in one-letter code: Ribosomal RNA large subunit methyltransferase I (396 aa).

Residues 2–81 (SVRLVLAKGR…ESIDIAFFSR (80 aa)) form the PUA domain.

This sequence belongs to the methyltransferase superfamily. RlmI family.

The protein resides in the cytoplasm. The enzyme catalyses cytidine(1962) in 23S rRNA + S-adenosyl-L-methionine = 5-methylcytidine(1962) in 23S rRNA + S-adenosyl-L-homocysteine + H(+). Its function is as follows. Specifically methylates the cytosine at position 1962 (m5C1962) of 23S rRNA. The sequence is that of Ribosomal RNA large subunit methyltransferase I from Shigella flexneri serotype 5b (strain 8401).